A 285-amino-acid chain; its full sequence is Probable endonuclease 4 (285 aa).

Zn(2+)-binding residues include histidine 69, histidine 109, glutamate 145, aspartate 179, histidine 182, histidine 216, aspartate 229, histidine 231, and glutamate 261.

The protein belongs to the AP endonuclease 2 family. It depends on Zn(2+) as a cofactor.

The catalysed reaction is Endonucleolytic cleavage to 5'-phosphooligonucleotide end-products.. Its function is as follows. Endonuclease IV plays a role in DNA repair. It cleaves phosphodiester bonds at apurinic or apyrimidinic (AP) sites, generating a 3'-hydroxyl group and a 5'-terminal sugar phosphate. The chain is Probable endonuclease 4 from Escherichia fergusonii (strain ATCC 35469 / DSM 13698 / CCUG 18766 / IAM 14443 / JCM 21226 / LMG 7866 / NBRC 102419 / NCTC 12128 / CDC 0568-73).